The following is a 284-amino-acid chain: MYVVSTKQMLNNAQRGGYAVPAFNIHNLETMQVVVETAANLHAPVIIAGTPGTFTHAGTENLLALVSAMAKQYHHPLTIHLDHHTKFDDIAQKVRSGVRSVMIDASHLPFAQNISRVKEVVDFCHRFDVSVEAELGQLGGQEDDVQVNEADALYTNPAQAREFAEATGIDSLAVAIGTAHGMYASAPVLDFSRLENIRQWVNLPLVLHGASGLSTKDIQQTIKVGICKINVATELKNAFSQALKNYLTEHPEATDPRDYLQSAKSAMRDVVSKVIADCGCEGRA.

The active-site Proton donor is Asp82. Residues His83 and His180 each coordinate Zn(2+). Dihydroxyacetone phosphate is bound at residue Gly181. Residue His208 coordinates Zn(2+). Dihydroxyacetone phosphate is bound by residues Gly209–Ser211 and Asn230–Thr233.

The protein belongs to the class II fructose-bisphosphate aldolase family. TagBP aldolase GatY subfamily. In terms of assembly, forms a complex with GatZ. Requires Zn(2+) as cofactor.

It carries out the reaction D-tagatofuranose 1,6-bisphosphate = D-glyceraldehyde 3-phosphate + dihydroxyacetone phosphate. It functions in the pathway carbohydrate metabolism; D-tagatose 6-phosphate degradation; D-glyceraldehyde 3-phosphate and glycerone phosphate from D-tagatose 6-phosphate: step 2/2. Functionally, catalytic subunit of the tagatose-1,6-bisphosphate aldolase GatYZ, which catalyzes the reversible aldol condensation of dihydroxyacetone phosphate (DHAP or glycerone-phosphate) with glyceraldehyde 3-phosphate (G3P) to produce tagatose 1,6-bisphosphate (TBP). Requires GatZ subunit for full activity and stability. Is involved in the catabolism of galactitol. This Escherichia coli O139:H28 (strain E24377A / ETEC) protein is D-tagatose-1,6-bisphosphate aldolase subunit GatY.